The primary structure comprises 367 residues: Anhydro-N-acetylmuramic acid kinase (367 aa).

13–20 (GTSMDGAD) lines the ATP pocket.

This sequence belongs to the anhydro-N-acetylmuramic acid kinase family.

It catalyses the reaction 1,6-anhydro-N-acetyl-beta-muramate + ATP + H2O = N-acetyl-D-muramate 6-phosphate + ADP + H(+). The protein operates within amino-sugar metabolism; 1,6-anhydro-N-acetylmuramate degradation. It functions in the pathway cell wall biogenesis; peptidoglycan recycling. Functionally, catalyzes the specific phosphorylation of 1,6-anhydro-N-acetylmuramic acid (anhMurNAc) with the simultaneous cleavage of the 1,6-anhydro ring, generating MurNAc-6-P. Is required for the utilization of anhMurNAc either imported from the medium or derived from its own cell wall murein, and thus plays a role in cell wall recycling. The chain is Anhydro-N-acetylmuramic acid kinase from Neisseria meningitidis serogroup C / serotype 2a (strain ATCC 700532 / DSM 15464 / FAM18).